A 705-amino-acid polypeptide reads, in one-letter code: Polyphosphate kinase (705 aa).

Asn-58 is a binding site for ATP. Residues Arg-389 and Arg-419 each contribute to the Mg(2+) site. His-449 functions as the Phosphohistidine intermediate in the catalytic mechanism. Tyr-482, Arg-578, and His-606 together coordinate ATP.

Belongs to the polyphosphate kinase 1 (PPK1) family. Mg(2+) serves as cofactor. An intermediate of this reaction is the autophosphorylated ppk in which a phosphate is covalently linked to a histidine residue through a N-P bond.

The catalysed reaction is [phosphate](n) + ATP = [phosphate](n+1) + ADP. Functionally, catalyzes the reversible transfer of the terminal phosphate of ATP to form a long-chain polyphosphate (polyP). The sequence is that of Polyphosphate kinase from Halalkalibacterium halodurans (strain ATCC BAA-125 / DSM 18197 / FERM 7344 / JCM 9153 / C-125) (Bacillus halodurans).